A 217-amino-acid chain; its full sequence is Deoxyribose-phosphate aldolase (217 aa).

Residue aspartate 89 is the Proton donor/acceptor of the active site. Lysine 151 serves as the catalytic Schiff-base intermediate with acetaldehyde. Lysine 180 serves as the catalytic Proton donor/acceptor.

It belongs to the DeoC/FbaB aldolase family. DeoC type 1 subfamily.

The protein localises to the cytoplasm. It carries out the reaction 2-deoxy-D-ribose 5-phosphate = D-glyceraldehyde 3-phosphate + acetaldehyde. It participates in carbohydrate degradation; 2-deoxy-D-ribose 1-phosphate degradation; D-glyceraldehyde 3-phosphate and acetaldehyde from 2-deoxy-alpha-D-ribose 1-phosphate: step 2/2. In terms of biological role, catalyzes a reversible aldol reaction between acetaldehyde and D-glyceraldehyde 3-phosphate to generate 2-deoxy-D-ribose 5-phosphate. This chain is Deoxyribose-phosphate aldolase, found in Metamycoplasma arthritidis (strain 158L3-1) (Mycoplasma arthritidis).